The sequence spans 441 residues: Dolichyl-diphosphooligosaccharide--protein glycosyltransferase 48 kDa subunit (441 aa).

An N-terminal signal peptide occupies residues Met-1–Ser-28. The Lumenal segment spans residues Gly-29–Pro-412. A helical membrane pass occupies residues Tyr-413 to Leu-432. At His-433 to Asp-441 the chain is on the cytoplasmic side.

The protein belongs to the DDOST 48 kDa subunit family. As to quaternary structure, component of the oligosaccharyltransferase (OST) complex. OST exists in two different complex forms which contain common core subunits RPN1, RPN2, OST48, OST4, DAD1 and TMEM258, either STT3A or STT3B as catalytic subunits, and form-specific accessory subunits. STT3A complex assembly occurs through the formation of 3 subcomplexes. Subcomplex 1 contains RPN1 and TMEM258, subcomplex 2 contains the STT3A-specific subunits STT3A, DC2/OSTC, and KCP2 as well as the core subunit OST4, and subcomplex 3 contains RPN2, DAD1, and OST48. The STT3A complex can form stable complexes with the Sec61 complex or with both the Sec61 and TRAP complexes. Interacts with SMIM22.

The protein resides in the endoplasmic reticulum membrane. It functions in the pathway protein modification; protein glycosylation. In terms of biological role, subunit of the oligosaccharyl transferase (OST) complex that catalyzes the initial transfer of a defined glycan (Glc(3)Man(9)GlcNAc(2) in eukaryotes) from the lipid carrier dolichol-pyrophosphate to an asparagine residue within an Asn-X-Ser/Thr consensus motif in nascent polypeptide chains, the first step in protein N-glycosylation. N-glycosylation occurs cotranslationally and the complex associates with the Sec61 complex at the channel-forming translocon complex that mediates protein translocation across the endoplasmic reticulum (ER). All subunits are required for a maximal enzyme activity. Required for the assembly of both SST3A- and SS3B-containing OST complexes. The chain is Dolichyl-diphosphooligosaccharide--protein glycosyltransferase 48 kDa subunit from Rattus norvegicus (Rat).